The primary structure comprises 156 residues: Arginine repressor (156 aa).

The protein belongs to the ArgR family.

Its subcellular location is the cytoplasm. It participates in amino-acid biosynthesis; L-arginine biosynthesis [regulation]. Its function is as follows. Regulates arginine biosynthesis genes. The polypeptide is Arginine repressor (Vibrio campbellii (strain ATCC BAA-1116)).